A 592-amino-acid chain; its full sequence is RNA-binding protein 47 (592 aa).

Residues 1–24 (MTAEDAAAAMSSDSAAGGAASAKA) show a composition bias toward low complexity. Positions 1 to 26 (MTAEDAAAAMSSDSAAGGAASAKAPE) are disordered. 3 consecutive RRM domains span residues 73 to 151 (CEVF…CSVD), 153 to 235 (CRLF…WAEP), and 248 to 320 (KILY…LAKP). Asymmetric dimethylarginine; alternate occurs at positions 397 and 408. Omega-N-methylarginine; alternate is present on residues R397 and R408.

Belongs to the RRM RBM47 family. Homodimer. Interacts with A1CF. Interacts with APOBEC1; form an mRNA editing complex. Interacts with RBPMS.

It localises to the nucleus. The protein resides in the cytoplasm. Its function is as follows. Single-stranded RNA-binding protein that functions in a variety of RNA processes, including alternative splicing, RNA stabilization, and RNA editing. Functions as an enzyme-substrate adapter for the cytidine deaminase APOBEC1. With APOBEC1 forms an mRNA editing complex involved into cytidine to uridine editing of a variety of mRNA molecules. Through the binding of their 3'UTR, also stabilizes a variety of mRNAs and regulates the expression of genes such as the interferon alpha/beta receptor and interleukin-10. Also involved in the alternative splicing of several genes including TJP1. Binds the pre-mRNA (U)GCAUG consensus sequences in downstream intronic regions of alternative exons, regulating their exclusion and inclusion into mRNAs. Independently of its RNA-binding activity, could negatively regulate MAVS by promoting its lysosomal degradation. In Canis lupus familiaris (Dog), this protein is RNA-binding protein 47.